The sequence spans 167 residues: Mediator of RNA polymerase II transcription subunit 10 (167 aa).

A disordered region spans residues 53-88; it reads LSTHTKPQPPSQDEEQKEKQDDTPEGSANDPLLRDI.

It belongs to the Mediator complex subunit 10 family. As to quaternary structure, component of the Mediator complex.

It localises to the nucleus. In terms of biological role, component of the Mediator complex, a coactivator involved in the regulated transcription of nearly all RNA polymerase II-dependent genes. Mediator functions as a bridge to convey information from gene-specific regulatory proteins to the basal RNA polymerase II transcription machinery. Mediator is recruited to promoters by direct interactions with regulatory proteins and serves as a scaffold for the assembly of a functional preinitiation complex with RNA polymerase II and the general transcription factors. This chain is Mediator of RNA polymerase II transcription subunit 10 (nut2), found in Neosartorya fischeri (strain ATCC 1020 / DSM 3700 / CBS 544.65 / FGSC A1164 / JCM 1740 / NRRL 181 / WB 181) (Aspergillus fischerianus).